The following is a 419-amino-acid chain: G protein-activated inward rectifier potassium channel 4 (419 aa).

The Cytoplasmic segment spans residues 1 to 86; sequence MAGDSRNAMN…LFTTLVDLKW (86 aa). Phosphoserine is present on serine 5. The chain crosses the membrane as a helical span at residues 87 to 111; that stretch reads RFNLLVFTMVYTITWLFFGFIWWLI. The Extracellular segment spans residues 112-135; sequence AYVRGDLDHVGDQEWIPCVENLSG. The segment at residues 136–147 is an intramembrane region (helical; Pore-forming); it reads FVSAFLFSIETE. Residues 148–154 constitute an intramembrane region (pore-forming); it reads TTIGYGF. The Selectivity filter signature appears at 149 to 154; that stretch reads TIGYGF. Residues 155 to 163 are Extracellular-facing; the sequence is RVITEKCPE. A helical transmembrane segment spans residues 164–185; that stretch reads GIILLLVQAILGSIVNAFMVGC. At 186 to 419 the chain is on the cytoplasmic side; the sequence is MFVKISQPKK…SVSRATRGSM (234 aa). The span at 380 to 390 shows a compositional bias: low complexity; the sequence is LPSPPLLGGCA. Residues 380-419 are disordered; it reads LPSPPLLGGCAEAEKEAEAEHDEEEEPNGLSVSRATRGSM. Residues 409 to 419 are compositionally biased toward polar residues; that stretch reads LSVSRATRGSM.

It belongs to the inward rectifier-type potassium channel (TC 1.A.2.1) family. KCNJ5 subfamily. As to quaternary structure, associates with KCNJ3/GIRK1 or KCNJ6/GRIK2 to form a G-protein-activated heteromultimer pore-forming unit. The resulting inward current is much larger. Most abundant in heart tissue where it is found predominantly in atria. Also found in brain, kidney, liver, spleen, lung and thymus.

The protein localises to the membrane. It catalyses the reaction K(+)(in) = K(+)(out). Heteromultimer composed of KCNJ3/GIRK1 and KCNJ5/GIRK4 is activated by phosphatidylinositol 4,5 biphosphate (PtdIns(4,5)P2). In terms of biological role, inward rectifier potassium channels are characterized by a greater tendency to allow potassium to flow into the cell rather than out of it. Their voltage dependence is regulated by the concentration of extracellular potassium; as external potassium is raised, the voltage range of the channel opening shifts to more positive voltages. The inward rectification is mainly due to the blockage of outward current by internal magnesium. Can be blocked by external barium. This potassium channel is controlled by G proteins. The polypeptide is G protein-activated inward rectifier potassium channel 4 (Kcnj5) (Rattus norvegicus (Rat)).